Consider the following 1176-residue polypeptide: Growth-differentiation transition protein 5 (1176 aa).

The signal sequence occupies residues 1 to 25; sequence MKNNFFKKTIILLIFLSIFILYSNA. Over 26-913 the chain is Extracellular; that stretch reads DEETITTPPG…DVPANENTLN (888 aa). The helical transmembrane segment at 914 to 934 threads the bilayer; that stretch reads LLTIVLPICSAVVVASSVMLG. Over 935 to 1176 the chain is Cytoplasmic; that stretch reads RLFYKKKFKK…NVGYNVHEYF (242 aa). Low complexity-rich tracts occupy residues 965–974 and 1053–1066; these read SNIENKSESI and PQIS…SIPS. Disordered stretches follow at residues 965–985 and 1050–1080; these read SNIE…EQKE and VDTP…PPST. Over residues 1067 to 1078 the composition is skewed to pro residues; sequence SSPPPPPLPLPP.

The protein belongs to the GDT family.

The protein localises to the membrane. The sequence is that of Growth-differentiation transition protein 5 (gdt5) from Dictyostelium discoideum (Social amoeba).